A 141-amino-acid polypeptide reads, in one-letter code: Regulator of ribonuclease activity B (141 aa).

Positions 112-141 (GTYFEDPNAPDDEDDNDDLFPPEEDEPRLH) are disordered. Residues 119 to 141 (NAPDDEDDNDDLFPPEEDEPRLH) show a composition bias toward acidic residues.

This sequence belongs to the RraB family. Interacts with the C-terminal region of Rne.

It localises to the cytoplasm. Functionally, globally modulates RNA abundance by binding to RNase E (Rne) and regulating its endonucleolytic activity. Can modulate Rne action in a substrate-dependent manner by altering the composition of the degradosome. The protein is Regulator of ribonuclease activity B of Xenorhabdus nematophila (strain ATCC 19061 / DSM 3370 / CCUG 14189 / LMG 1036 / NCIMB 9965 / AN6).